We begin with the raw amino-acid sequence, 398 residues long: Ras-related GTP-binding protein C (398 aa).

Residues 1–56 (MSLQYGAEETPLAGSYGAADSFPKDFGYGVEEEEEEAAAGGGGGAGAGGGCGPGGA) form a disordered region. An N-acetylserine modification is found at Ser2. Ser2 and Ser15 each carry phosphoserine. A compositionally biased stretch (gly residues) spans 39–55 (AGGGGGAGAGGGCGPGG). GDP is bound by residues Arg70, Ser71, Gly72, Lys73, Ser74, and Ser75. Lys73 is a GTP binding site. Positions 89 and 95 each coordinate GTP. Position 95 is a phosphothreonine (Thr95). 4 residues coordinate GDP: His177, Lys178, Asp180, and Ile219. Asp180 provides a ligand contact to GTP.

The protein belongs to the GTR/RAG GTP-binding protein family. As to quaternary structure, forms a heterodimer with RRAGA, in a sequence-independent manner, and RRAGB. Heterodimerization stabilizes proteins of the heterodimer. The GDP-bound form of RRAGC (in complex with the GTP-bound form of RRAGA or RRAGB), interacts with RPTOR, thereby promoting recruitment of mTORC1 to the lysosomes. Component of the lysosomal folliculin complex (LFC), composed of FLCN, FNIP1 (or FNIP2), RagA/RRAGA or RagB/RRAGB GDP-bound, RagC/RRAGC or RagD/RRAGD GTP-bound, and Ragulator. Interacts with NOL8. Interacts with SH3BP4; the interaction with this negative regulator is most probably direct, preferentially occurs with the inactive GDP-bound form of RRAGB, is negatively regulated by amino acids and prevents interaction with RPTOR. The Rag heterodimer interacts with SLC38A9; the probable amino acid sensor. Interacts with SESN1, SESN2 and SESN3. Interacts with PIP4P1. The GDP-bound form interacts with TFEB. The GDP-bound form interacts with TFE3. Expressed most abundantly in kidney. Moderately expressed in brain, ovary, and testis, and detected at lower levels in heart, liver, and muscle. Not detected in lung, spleen, and small intestine. Widely expressed in tumor cells, with expression being specifically up-regulated in highly metastatic cells.

The protein resides in the cytoplasm. Its subcellular location is the nucleus. The protein localises to the lysosome membrane. It catalyses the reaction GTP + H2O = GDP + phosphate + H(+). With respect to regulation, the activation of RagC/RRAGC is mediated by a GTPase activating protein (GAP). In high-amino acid conditions, activated by GTPase activating protein FLCN that stimulates RRAGC GTPase activity to turn it into its active GDP-bound form. In response to amino acid depletion, the GATOR1 complex inactivates RagC/RRAGC by securing the GTP-bound inactive form. In terms of biological role, guanine nucleotide-binding protein that plays a crucial role in the cellular response to amino acid availability through regulation of the mTORC1 signaling cascade. Forms heterodimeric Rag complexes with RagA/RRAGA or RagB/RRAGB and cycles between an inactive GTP-bound and an active GDP-bound form: RagC/RRAGC is in its active form when GDP-bound RagC/RRAGC forms a complex with GTP-bound RagA/RRAGA (or RagB/RRAGB) and in an inactive form when GTP-bound RagC/RRAGC heterodimerizes with GDP-bound RagA/RRAGA (or RagB/RRAGB). In its GDP-bound active form, promotes the recruitment of mTORC1 to the lysosomes and its subsequent activation by the GTPase RHEB. This is a crucial step in the activation of the MTOR signaling cascade by amino acids. Also plays a central role in the non-canonical mTORC1 complex, which acts independently of RHEB and specifically mediates phosphorylation of MiT/TFE factors TFEB and TFE3: GDP-bound RagC/RRAGC mediates recruitment of MiT/TFE factors TFEB and TFE3. The protein is Ras-related GTP-binding protein C of Mus musculus (Mouse).